The sequence spans 144 residues: Large ribosomal subunit protein uL16 (144 aa).

The protein belongs to the universal ribosomal protein uL16 family. Part of the 50S ribosomal subunit.

In terms of biological role, binds 23S rRNA and is also seen to make contacts with the A and possibly P site tRNAs. The protein is Large ribosomal subunit protein uL16 of Bacillus licheniformis (strain ATCC 14580 / DSM 13 / JCM 2505 / CCUG 7422 / NBRC 12200 / NCIMB 9375 / NCTC 10341 / NRRL NRS-1264 / Gibson 46).